The sequence spans 226 residues: 1-hydroxy-2-glutathionyl-2-methyl-3-butene dehydrogenase (226 aa).

Belongs to the short-chain dehydrogenases/reductases (SDR) family.

It catalyses the reaction 2-glutathionyl-2-methylbut-3-en-1-ol + 2 NAD(+) + H2O = 2-glutathionyl-2-methylbut-3-enoate + 2 NADH + 3 H(+). It carries out the reaction 2-glutathionyl-2-methylbut-3-en-1-ol + NAD(+) = 2-glutathionyl-2-methylbut-3-enal + NADH + H(+). The catalysed reaction is 2-glutathionyl-2-methylbut-3-enal + NAD(+) + H2O = 2-glutathionyl-2-methylbut-3-enoate + NADH + 2 H(+). In terms of biological role, involved in isoprene degradation. Catalyzes the two-step NAD(+)-dependent oxidation of 2-glutathionyl-2-methylbut-3-en-1-ol (HGMB) to 2-glutathionyl-2-methylbut-3-enoate (GMBA). The chain is 1-hydroxy-2-glutathionyl-2-methyl-3-butene dehydrogenase from Rhodococcus sp. (strain AD45).